The chain runs to 280 residues: Myelin proteolipid protein A (280 aa).

The Cytoplasmic portion of the chain corresponds to Met1 to Cys10. 2 S-palmitoyl cysteine lipidation sites follow: Cys7 and Cys10. The helical transmembrane segment at Met11–Gly36 threads the bilayer. The Extracellular portion of the chain corresponds to His37–Glu59. A helical transmembrane segment spans residues Tyr60 to Ala88. The Cytoplasmic segment spans residues Glu89–Lys152. S-palmitoyl cysteine attachment occurs at residues Cys140 and Cys142. A helical transmembrane segment spans residues Phe153–Phe179. At Asn180–His239 the chain is on the extracellular side. Disulfide bonds link Cys185–Cys229 and Cys202–Cys221. Residues Leu240 to Leu269 traverse the membrane as a helical segment. Topologically, residues Arg270 to Phe280 are cytoplasmic.

This sequence belongs to the myelin proteolipid protein family.

The protein resides in the cell membrane. Its function is as follows. This is the major myelin protein from the central nervous system. It plays an important role in the formation or maintenance of the multilamellar structure of myelin. In Xenopus laevis (African clawed frog), this protein is Myelin proteolipid protein A (plp1-a).